The following is an 826-amino-acid chain: G-protein coupled receptor-associated sorting protein 2 (826 aa).

Disordered stretches follow at residues 1-126 (MTGA…AQAW), 204-286 (WCYP…NPFC), 336-371 (EGNR…QESR), and 506-534 (IPEG…DSVA). Over residues 13 to 31 (KPDKKPQEEVAGGAERESE) the composition is skewed to basic and acidic residues. Over residues 59–73 (SSRARPKTETQSVSG) the composition is skewed to polar residues. The segment covering 231-247 (TREETSIRSWPREEVNT) has biased composition (basic and acidic residues). The segment covering 248–264 (RSRHRAKHQTNARSKPR) has biased composition (basic residues). Phosphoserine occurs at positions 275 and 277.

The protein belongs to the GPRASP family. As to quaternary structure, interacts with cytoplasmic tails of a variety of G-protein coupled receptors such as muscarinic acetylcholine receptor M1/CHRM1 and calcitonin receptor/CALCR. In terms of tissue distribution, strongly expressed in the brain and the cochlea. Also in lung and muscle tissues. Localized in multiple structures of the cochlea, detected in the spiral ganglion, stria vascularis, spiral ligament, inner and outer hair cells.

In terms of biological role, may play a role in regulation of a variety of G-protein coupled receptors. In Mus musculus (Mouse), this protein is G-protein coupled receptor-associated sorting protein 2 (Gprasp2).